We begin with the raw amino-acid sequence, 227 residues long: Cytochrome c oxidase subunit 2 (227 aa).

Residues 1–14 (MAYPFQLGLQDATS) are Mitochondrial intermembrane-facing. Residues 15-45 (PIMEELTNFHDHTLMIVFLISSLVLYIISLM) traverse the membrane as a helical segment. Residues 46–59 (LTTKLTHTSTMDAQ) are Mitochondrial matrix-facing. The chain crosses the membrane as a helical span at residues 60 to 87 (EVETIWTILPAAILVLIALPSLRILYMM). Residues 88 to 227 (DEINNPVLTV…YFESWSASMI (140 aa)) lie on the Mitochondrial intermembrane side of the membrane. The Cu cation site is built by His161, Cys196, Glu198, Cys200, His204, and Met207. A Mg(2+)-binding site is contributed by Glu198. Tyr218 carries the post-translational modification Phosphotyrosine.

This sequence belongs to the cytochrome c oxidase subunit 2 family. As to quaternary structure, component of the cytochrome c oxidase (complex IV, CIV), a multisubunit enzyme composed of 14 subunits. The complex is composed of a catalytic core of 3 subunits MT-CO1, MT-CO2 and MT-CO3, encoded in the mitochondrial DNA, and 11 supernumerary subunits COX4I, COX5A, COX5B, COX6A, COX6B, COX6C, COX7A, COX7B, COX7C, COX8 and NDUFA4, which are encoded in the nuclear genome. The complex exists as a monomer or a dimer and forms supercomplexes (SCs) in the inner mitochondrial membrane with NADH-ubiquinone oxidoreductase (complex I, CI) and ubiquinol-cytochrome c oxidoreductase (cytochrome b-c1 complex, complex III, CIII), resulting in different assemblies (supercomplex SCI(1)III(2)IV(1) and megacomplex MCI(2)III(2)IV(2)). Found in a complex with TMEM177, COA6, COX18, COX20, SCO1 and SCO2. Interacts with TMEM177 in a COX20-dependent manner. Interacts with COX20. Interacts with COX16. Cu cation is required as a cofactor.

Its subcellular location is the mitochondrion inner membrane. The enzyme catalyses 4 Fe(II)-[cytochrome c] + O2 + 8 H(+)(in) = 4 Fe(III)-[cytochrome c] + 2 H2O + 4 H(+)(out). Its function is as follows. Component of the cytochrome c oxidase, the last enzyme in the mitochondrial electron transport chain which drives oxidative phosphorylation. The respiratory chain contains 3 multisubunit complexes succinate dehydrogenase (complex II, CII), ubiquinol-cytochrome c oxidoreductase (cytochrome b-c1 complex, complex III, CIII) and cytochrome c oxidase (complex IV, CIV), that cooperate to transfer electrons derived from NADH and succinate to molecular oxygen, creating an electrochemical gradient over the inner membrane that drives transmembrane transport and the ATP synthase. Cytochrome c oxidase is the component of the respiratory chain that catalyzes the reduction of oxygen to water. Electrons originating from reduced cytochrome c in the intermembrane space (IMS) are transferred via the dinuclear copper A center (CU(A)) of subunit 2 and heme A of subunit 1 to the active site in subunit 1, a binuclear center (BNC) formed by heme A3 and copper B (CU(B)). The BNC reduces molecular oxygen to 2 water molecules using 4 electrons from cytochrome c in the IMS and 4 protons from the mitochondrial matrix. The polypeptide is Cytochrome c oxidase subunit 2 (MT-CO2) (Conilurus penicillatus (Brush-tailed rabbit-rat)).